The following is a 68-amino-acid chain: DNA gyrase inhibitor YacG (68 aa).

The Zn(2+) site is built by C10, C13, C29, and C33. Residues 45 to 68 are disordered; sequence EKRIPSDTELSDSDEWSEEDPLKH. The segment covering 53–68 has biased composition (acidic residues); that stretch reads ELSDSDEWSEEDPLKH.

It belongs to the DNA gyrase inhibitor YacG family. As to quaternary structure, interacts with GyrB. The cofactor is Zn(2+).

Inhibits all the catalytic activities of DNA gyrase by preventing its interaction with DNA. Acts by binding directly to the C-terminal domain of GyrB, which probably disrupts DNA binding by the gyrase. The polypeptide is DNA gyrase inhibitor YacG (Yersinia pseudotuberculosis serotype O:1b (strain IP 31758)).